The sequence spans 110 residues: Large ribosomal subunit protein uL22 (110 aa).

It belongs to the universal ribosomal protein uL22 family. In terms of assembly, part of the 50S ribosomal subunit.

This protein binds specifically to 23S rRNA; its binding is stimulated by other ribosomal proteins, e.g. L4, L17, and L20. It is important during the early stages of 50S assembly. It makes multiple contacts with different domains of the 23S rRNA in the assembled 50S subunit and ribosome. Functionally, the globular domain of the protein is located near the polypeptide exit tunnel on the outside of the subunit, while an extended beta-hairpin is found that lines the wall of the exit tunnel in the center of the 70S ribosome. The protein is Large ribosomal subunit protein uL22 of Acidovorax ebreus (strain TPSY) (Diaphorobacter sp. (strain TPSY)).